The primary structure comprises 131 residues: Small ribosomal subunit protein uS8 (131 aa).

This sequence belongs to the universal ribosomal protein uS8 family. Part of the 30S ribosomal subunit. Contacts proteins S5 and S12.

Its function is as follows. One of the primary rRNA binding proteins, it binds directly to 16S rRNA central domain where it helps coordinate assembly of the platform of the 30S subunit. This Wolinella succinogenes (strain ATCC 29543 / DSM 1740 / CCUG 13145 / JCM 31913 / LMG 7466 / NCTC 11488 / FDC 602W) (Vibrio succinogenes) protein is Small ribosomal subunit protein uS8.